A 190-amino-acid chain; its full sequence is Cytoplasmic envelopment protein 3 (190 aa).

Gly2 carries N-myristoyl glycine; by host lipidation. Residues 27–190 (RQVSLRSYDN…TKKPAASLPF (164 aa)) form a disordered region. The span at 30 to 43 (SLRSYDNIPPTSSS) shows a compositional bias: polar residues. Residues 44-58 (DEGEDDDDGEDDDNE) are compositionally biased toward acidic residues. Positions 80–90 (SHREATHDGSK) are enriched in basic and acidic residues. A compositionally biased stretch (basic residues) spans 108 to 123 (KQSKKKKKPSKHHHHQ). Over residues 130 to 139 (ETDDLDEEDT) the composition is skewed to acidic residues.

The protein belongs to the herpesviridae cytoplasmic envelopment protein 3 family. In terms of assembly, interacts with cytoplasmic envelopment protein 2; this interaction is essential for the proper localization of each protein to the assembly complex and thus for the production of infectious virus. Post-translationally, myristoylation and palmitoylation (probably on one or more of the nearby cysteines at the N-terminus) enable membrane-binding and Golgi apparatus-specific targeting and are essential for efficient packaging. Phosphorylated. Phosphorylation does not seem to be required for recycling to the host Golgi apparatus. Packaging is selective for underphosphorylated forms.

It localises to the virion tegument. Its subcellular location is the virion membrane. It is found in the host cell membrane. The protein resides in the host Golgi apparatus membrane. In terms of biological role, plays an important role in the cytoplasmic envelopment of tegument proteins and capsids during the assembly and egress processes. Also participates in viral entry at the fusion step probably by regulating the core fusion machinery. The sequence is that of Cytoplasmic envelopment protein 3 (UL99) from Human cytomegalovirus (strain AD169) (HHV-5).